Reading from the N-terminus, the 354-residue chain is DNA polymerase IV 2 (354 aa).

Residues 4-184 (IIHIDMDAFY…LPVKKFHGVG (181 aa)) enclose the UmuC domain. Mg(2+)-binding residues include Asp-8 and Asp-102. Glu-103 is an active-site residue.

The protein belongs to the DNA polymerase type-Y family. As to quaternary structure, monomer. Requires Mg(2+) as cofactor.

The protein localises to the cytoplasm. It carries out the reaction DNA(n) + a 2'-deoxyribonucleoside 5'-triphosphate = DNA(n+1) + diphosphate. Its function is as follows. Poorly processive, error-prone DNA polymerase involved in untargeted mutagenesis. Copies undamaged DNA at stalled replication forks, which arise in vivo from mismatched or misaligned primer ends. These misaligned primers can be extended by PolIV. Exhibits no 3'-5' exonuclease (proofreading) activity. May be involved in translesional synthesis, in conjunction with the beta clamp from PolIII. This is DNA polymerase IV 2 (dinB2) from Rhizobium meliloti (strain 1021) (Ensifer meliloti).